Reading from the N-terminus, the 340-residue chain is NADH-quinone oxidoreductase subunit H (340 aa).

The next 8 membrane-spanning stretches (helical) occupy residues 4 to 24 (TIGI…PLLI), 78 to 98 (YLFV…WAVI), 113 to 133 (VLYL…AGWA), 151 to 171 (VSYE…AGSM), 184 to 204 (MLHW…ISGI), 244 to 264 (SMIL…LSPF), 273 to 293 (IFFI…FLFV), and 316 to 336 (VLIP…VAHV).

Belongs to the complex I subunit 1 family. In terms of assembly, NDH-1 is composed of 14 different subunits. Subunits NuoA, H, J, K, L, M, N constitute the membrane sector of the complex.

The protein resides in the cell inner membrane. The enzyme catalyses a quinone + NADH + 5 H(+)(in) = a quinol + NAD(+) + 4 H(+)(out). Functionally, NDH-1 shuttles electrons from NADH, via FMN and iron-sulfur (Fe-S) centers, to quinones in the respiratory chain. The immediate electron acceptor for the enzyme in this species is believed to be ubiquinone. Couples the redox reaction to proton translocation (for every two electrons transferred, four hydrogen ions are translocated across the cytoplasmic membrane), and thus conserves the redox energy in a proton gradient. This subunit may bind ubiquinone. This is NADH-quinone oxidoreductase subunit H from Legionella pneumophila (strain Lens).